The following is a 138-amino-acid chain: NADPH-dependent 7-cyano-7-deazaguanine reductase (138 aa).

Cysteine 53 (thioimide intermediate) is an active-site residue. Catalysis depends on aspartate 60, which acts as the Proton donor. Residues valine 75–leucine 77 and histidine 94–glutamate 95 contribute to the substrate site.

It belongs to the GTP cyclohydrolase I family. QueF type 1 subfamily.

Its subcellular location is the cytoplasm. It catalyses the reaction 7-aminomethyl-7-carbaguanine + 2 NADP(+) = 7-cyano-7-deazaguanine + 2 NADPH + 3 H(+). Its pathway is tRNA modification; tRNA-queuosine biosynthesis. In terms of biological role, catalyzes the NADPH-dependent reduction of 7-cyano-7-deazaguanine (preQ0) to 7-aminomethyl-7-deazaguanine (preQ1). The chain is NADPH-dependent 7-cyano-7-deazaguanine reductase from Gloeothece citriformis (strain PCC 7424) (Cyanothece sp. (strain PCC 7424)).